A 139-amino-acid polypeptide reads, in one-letter code: Large ribosomal subunit protein uL16 (139 aa).

A disordered region spans residues 1–23 (MLQPARTKYRKMHKGRMPGSAHR). The segment covering 7-16 (TKYRKMHKGR) has biased composition (basic residues).

This sequence belongs to the universal ribosomal protein uL16 family. As to quaternary structure, part of the 50S ribosomal subunit.

In terms of biological role, binds 23S rRNA and is also seen to make contacts with the A and possibly P site tRNAs. The protein is Large ribosomal subunit protein uL16 of Myxococcus xanthus (strain DK1622).